The sequence spans 321 residues: Lipoyl synthase (321 aa).

Residues cysteine 68, cysteine 73, cysteine 79, cysteine 94, cysteine 98, cysteine 101, and serine 308 each contribute to the [4Fe-4S] cluster site. The Radical SAM core domain occupies 80-297 (FNHGTATFMI…KDYAEEIGFT (218 aa)).

This sequence belongs to the radical SAM superfamily. Lipoyl synthase family. The cofactor is [4Fe-4S] cluster.

Its subcellular location is the cytoplasm. The catalysed reaction is [[Fe-S] cluster scaffold protein carrying a second [4Fe-4S](2+) cluster] + N(6)-octanoyl-L-lysyl-[protein] + 2 oxidized [2Fe-2S]-[ferredoxin] + 2 S-adenosyl-L-methionine + 4 H(+) = [[Fe-S] cluster scaffold protein] + N(6)-[(R)-dihydrolipoyl]-L-lysyl-[protein] + 4 Fe(3+) + 2 hydrogen sulfide + 2 5'-deoxyadenosine + 2 L-methionine + 2 reduced [2Fe-2S]-[ferredoxin]. Its pathway is protein modification; protein lipoylation via endogenous pathway; protein N(6)-(lipoyl)lysine from octanoyl-[acyl-carrier-protein]: step 2/2. Catalyzes the radical-mediated insertion of two sulfur atoms into the C-6 and C-8 positions of the octanoyl moiety bound to the lipoyl domains of lipoate-dependent enzymes, thereby converting the octanoylated domains into lipoylated derivatives. The sequence is that of Lipoyl synthase from Shewanella loihica (strain ATCC BAA-1088 / PV-4).